A 255-amino-acid polypeptide reads, in one-letter code: RNA polymerase sigma-F factor (255 aa).

The Polymerase core binding signature appears at 61–74; that stretch reads DLFQIGCIGLLKSV. The segment at residues 221–240 is a DNA-binding region (H-T-H motif); it reads QSEVAERLGISQVQVSRLEK.

The protein belongs to the sigma-70 factor family. Interacts transiently with the RNAP core.

Its activity is regulated as follows. Interaction with SpoIIAB inhibits sigma-F activity throughout the cell before the formation of the asymmetric septum; after septation the interaction is confined to the mother cell, and sigma-F activity is released in the prespore. Fin, a second, forespore-specific anti-sigma factor is induced in 2 successive waves by sigma-F and sigma-G, by antagonizing sigma-F it allows the switch to sigma-G factor and progression to the late sporulation development stages. In terms of biological role, sigma factors are initiation factors that promote the attachment of RNA polymerase to specific initiation sites and are then released. This sigma factor is responsible for the expression of sporulation specific genes. Interaction with SpoIIAB inhibits sigma-F activity throughout the cell before the formation of the asymmetric septum; after septation the interaction is confined to the mother cell, and sigma F activity is released in the prespore. Responsible for expression of csfB (the anti-sigma-G factor Gin). Associates with the RNAP core only in stationary phase cells. This chain is RNA polymerase sigma-F factor (sigF), found in Bacillus subtilis (strain 168).